Reading from the N-terminus, the 270-residue chain is Putative phosphoenolpyruvate synthase regulatory protein (270 aa).

150-157 contacts ADP; the sequence is GVSRCGKT.

It belongs to the pyruvate, phosphate/water dikinase regulatory protein family. PSRP subfamily.

It catalyses the reaction [pyruvate, water dikinase] + ADP = [pyruvate, water dikinase]-phosphate + AMP + H(+). It carries out the reaction [pyruvate, water dikinase]-phosphate + phosphate + H(+) = [pyruvate, water dikinase] + diphosphate. Bifunctional serine/threonine kinase and phosphorylase involved in the regulation of the phosphoenolpyruvate synthase (PEPS) by catalyzing its phosphorylation/dephosphorylation. This is Putative phosphoenolpyruvate synthase regulatory protein from Shewanella pealeana (strain ATCC 700345 / ANG-SQ1).